A 407-amino-acid chain; its full sequence is Tryptophan synthase beta chain (407 aa).

K91 carries the N6-(pyridoxal phosphate)lysine modification.

The protein belongs to the TrpB family. Tetramer of two alpha and two beta chains. Pyridoxal 5'-phosphate serves as cofactor.

It catalyses the reaction (1S,2R)-1-C-(indol-3-yl)glycerol 3-phosphate + L-serine = D-glyceraldehyde 3-phosphate + L-tryptophan + H2O. The protein operates within amino-acid biosynthesis; L-tryptophan biosynthesis; L-tryptophan from chorismate: step 5/5. The beta subunit is responsible for the synthesis of L-tryptophan from indole and L-serine. The protein is Tryptophan synthase beta chain of Streptococcus pneumoniae (strain JJA).